Reading from the N-terminus, the 224-residue chain is UPF0758 protein AHA_0160 (224 aa).

Positions 102-224 constitute an MPN domain; it reads PLTSPQLTRD…TVSFAERGWL (123 aa). 3 residues coordinate Zn(2+): His173, His175, and Asp186. Residues 173-186 carry the JAMM motif motif; it reads HNHPSGVAEPSRAD.

Belongs to the UPF0758 family.

This is UPF0758 protein AHA_0160 from Aeromonas hydrophila subsp. hydrophila (strain ATCC 7966 / DSM 30187 / BCRC 13018 / CCUG 14551 / JCM 1027 / KCTC 2358 / NCIMB 9240 / NCTC 8049).